Reading from the N-terminus, the 1475-residue chain is Peroxidasin homolog (1475 aa).

The signal sequence occupies residues 1 to 23 (MAVRPTRRCLLALLLCFAWWAMA). Residues 24–60 (VVASKQGAGCPSRCLCFRTTVRCMHLLLEAVPAVAPQ) enclose the LRRNT domain. Intrachain disulfides connect Cys33–Cys39 and Cys37–Cys46. 6 LRR repeats span residues 58 to 81 (APQT…AFRR), 82 to 105 (LRSL…AFED), 107 to 129 (ENLK…AFKG), 130 to 153 (LASL…SFQH), 154 to 177 (LPKL…TFSQ), and 179 to 201 (ESMK…LWLA). The 53-residue stretch at 189–241 (NALHCDCEILWLADLLKTYAQSGNAQAAATCEYPRRIQGRSVATITPEELNCE) folds into the LRRCT domain. Disulfide bonds link Cys193/Cys240, Cys195/Cys219, Cys264/Cys314, Cys360/Cys409, Cys451/Cys499, and Cys543/Cys591. Ig-like C2-type domains follow at residues 243–329 (PRIT…QEVT), 339–425 (PTFV…AFII), 430–517 (PQFT…LTVQ), and 518–607 (PRVT…MVLS). The N-linked (GlcNAc...) asparagine glycan is linked to Asn387. One copy of the LRR 7 repeat lies at 402–425 (SDSGEYTCFASNSVDSIHATAFII). 4 N-linked (GlcNAc...) asparagine glycosylation sites follow: Asn637, Asn696, Asn716, and Asn728. 4 disulfide bridges follow: Cys720–Cys882, Cys729–Cys745, Cys844–Cys854, and Cys848–Cys872. Asp823 serves as a coordination point for heme b. Residue His824 is the Proton acceptor of the active site. Residue Asp825 coordinates Ca(2+). Ca(2+) is bound by residues Thr904, Tyr906, Asp908, and Ser910. Cys956 and Cys967 are disulfide-bonded. N-linked (GlcNAc...) asparagine glycosylation occurs at Asn961. Heme b-binding residues include Glu977 and His1071. The LRR 8 repeat unit spans residues 1148-1172 (ALDLAAINIQRGRDHGIPPYHDYRV). Position 1173 is a phosphotyrosine (Tyr1173). Cystine bridges form between Cys1174–Cys1231 and Cys1272–Cys1298. A glycan (N-linked (GlcNAc...) asparagine) is linked at Asn1175. Ser1177 carries the phosphoserine modification. The LRR 9 repeat unit spans residues 1267-1288 (LARILCDNSDNITRVQQDVFRV). Asn1277 and Asn1364 each carry an N-linked (GlcNAc...) asparagine glycan. The interval 1312–1407 (CCEDCRTRGQ…QINSLESRLS (96 aa)) is required in homotrimerization. The 59-residue stretch at 1409-1467 (TECVDDSGESHGGNTKWKKDPCTVCECKNGQITCFVEACQPAACPQPVKVEGACCPVCL) folds into the VWFC domain.

It belongs to the peroxidase family. XPO subfamily. In terms of assembly, homotrimer; disulfide-linked. The homotrimer form is predominant. Homooligomer; disulfide-linked. Oligomerization occurs intracellularly before C-terminal proteolytic cleavage. Interacts with PXDNL; this interaction inhibits the peroxidase activity of PXDN. Ca(2+) is required as a cofactor. The cofactor is heme b. In terms of processing, processed by FURIN and the proteolytic processing largely depends on the peroxidase activity of PXDN. The proteolytic cleavage occurs after intracellular homotrimerization and releases into the extracellular matrix a large, catalytically active fragment and a smaller fragment consisting primarily of the C-terminal VWFC domain. The processing enhances both peroxidase activity and sulfilimine cross-links formation. As to expression, highly expressed in the cardiovascular system. In the embryo, expressed in the corneal epithelial layer. In the adult eyes, expressed in the corneal and lens epithelium. Expressed in lung.

Its subcellular location is the secreted. The protein localises to the extracellular space. It localises to the extracellular matrix. It is found in the endoplasmic reticulum. The protein resides in the cell surface. Its subcellular location is the basement membrane. It catalyses the reaction L-lysyl-[collagen] + L-methionyl-[collagen] + H2O2 = [collagen]-L-lysyl-N-S-L-methionyl-[collagen] + 2 H2O + H(+). The catalysed reaction is bromide + H2O2 = hypobromite + H2O. It carries out the reaction L-lysyl-[collagen] + L-methionyl-[collagen] + hypobromite = [collagen]-L-lysyl-N-S-L-methionyl-[collagen] + bromide + H2O + H(+). The enzyme catalyses (5R)-5-hydroxy-L-lysyl-[collagen] + L-methionyl-[collagen] + hypobromite = [collagen]-(5R)-5-hydroxy-L-lysyl-N-S-L-methionyl-[collagen] + bromide + H2O + H(+). It catalyses the reaction (5R)-5-hydroxy-L-lysyl-[collagen] + L-methionyl-[collagen] + H2O2 = [collagen]-(5R)-5-hydroxy-L-lysyl-N-S-L-methionyl-[collagen] + 2 H2O + H(+). The catalysed reaction is L-tyrosyl-[protein] + bromide + H2O2 + H(+) = 3-bromo-L-tyrosyl-[protein] + 2 H2O. It carries out the reaction hypobromite + L-tyrosyl-[protein] + H(+) = 3-bromo-L-tyrosyl-[protein] + H2O. Thiocyanate inhibits the formation of 3-bromotyrosine. Its function is as follows. Catalyzes the two-electron oxidation of bromide by hydrogen peroxide and generates hypobromite as a reactive intermediate which mediates the formation of sulfilimine cross-links between methionine and hydroxylysine residues within an uncross-linked collagen IV/COL4A1 NC1 hexamer. In turns, directly contributes to the collagen IV network-dependent fibronectin/FN and laminin assembly, which is required for full extracellular matrix (ECM)-mediated signaling. Thus, sulfilimine cross-links are essential for growth factor-induced cell proliferation and survival in endothelial cells, an event essential to basement membrane integrity. In addition, through the bromide oxidation, may promote tubulogenesis and induce angiogenesis through ERK1/2, Akt, and FAK pathways. Moreover brominates alpha2 collagen IV chain/COL4A2 at 'Tyr-1480' and leads to bromine enrichment of the basement membranes. In vitro, can also catalyze the two-electron oxidation of thiocyanate and iodide and these two substrates could effectively compete with bromide and thus inhibit the formation of sulfilimine bonds. Binds laminins. May play a role in the organization of eyeball structure and lens development during eye development. The protein is Peroxidasin homolog of Mus musculus (Mouse).